Consider the following 87-residue polypeptide: Small ribosomal subunit protein bS20 (87 aa).

The disordered stretch occupies residues 1–27; that stretch reads MANIKSAKKRAIQSEKRRQHNASRRSM.

Belongs to the bacterial ribosomal protein bS20 family.

In terms of biological role, binds directly to 16S ribosomal RNA. This chain is Small ribosomal subunit protein bS20, found in Aeromonas salmonicida (strain A449).